A 144-amino-acid chain; its full sequence is 3-dehydroquinate dehydratase (144 aa).

Tyr24 (proton acceptor) is an active-site residue. Substrate contacts are provided by Asn76, His82, and Asp89. His102 (proton donor) is an active-site residue. Residues 103-104 (LS) and Arg113 contribute to the substrate site.

It belongs to the type-II 3-dehydroquinase family. As to quaternary structure, homododecamer.

The catalysed reaction is 3-dehydroquinate = 3-dehydroshikimate + H2O. It functions in the pathway metabolic intermediate biosynthesis; chorismate biosynthesis; chorismate from D-erythrose 4-phosphate and phosphoenolpyruvate: step 3/7. Functionally, catalyzes a trans-dehydration via an enolate intermediate. This Nitrosomonas europaea (strain ATCC 19718 / CIP 103999 / KCTC 2705 / NBRC 14298) protein is 3-dehydroquinate dehydratase.